We begin with the raw amino-acid sequence, 126 residues long: Holo-[acyl-carrier-protein] synthase (126 aa).

Aspartate 9 and glutamate 58 together coordinate Mg(2+).

The protein belongs to the P-Pant transferase superfamily. AcpS family. Mg(2+) is required as a cofactor.

The protein resides in the cytoplasm. The enzyme catalyses apo-[ACP] + CoA = holo-[ACP] + adenosine 3',5'-bisphosphate + H(+). Its function is as follows. Transfers the 4'-phosphopantetheine moiety from coenzyme A to a Ser of acyl-carrier-protein. This Escherichia fergusonii (strain ATCC 35469 / DSM 13698 / CCUG 18766 / IAM 14443 / JCM 21226 / LMG 7866 / NBRC 102419 / NCTC 12128 / CDC 0568-73) protein is Holo-[acyl-carrier-protein] synthase.